A 395-amino-acid polypeptide reads, in one-letter code: MDPINGSHSGANATISDITNGAYNATDAGEWTSSVMFKLRTCVLLLIVIMAVLGNMLVIVSVMRHRKLRVITNYFVVSLAFADILVAMVVMPFNFSVQFNQGWVFGETICDLWNSSDVYFTSTSILHLCCISVDRYYAIVKPLKYPIKMTKKMAFVMLAATWLSPITISYVPIFMGWYTTTDFLESRRDDQCEFKVNKPYAVISSSISFWIPCTIMIFTYLAIFKEANRQEKALHARAGNAMLMHRHSREVSDKNGALHINATTPTKDRNLLKMKREHKAARTLGIIMGAFILCWLPFFLYYVSTSLCDSCNCPEVVTVIMFWTGYFNSALNPIIYAYFNRDFRNAFKNTLACAFCSFCKRSASDLDAMERLDRRGSAQLRVPIPSRRASDLASL.

At 1 to 42 (MDPINGSHSGANATISDITNGAYNATDAGEWTSSVMFKLRTC) the chain is on the extracellular side. 3 N-linked (GlcNAc...) asparagine glycosylation sites follow: N5, N12, and N24. A helical transmembrane segment spans residues 43–63 (VLLLIVIMAVLGNMLVIVSVM). Over 64–74 (RHRKLRVITNY) the chain is Cytoplasmic. A helical transmembrane segment spans residues 75-95 (FVVSLAFADILVAMVVMPFNF). The Extracellular portion of the chain corresponds to 96-117 (SVQFNQGWVFGETICDLWNSSD). An N-linked (GlcNAc...) asparagine glycan is attached at N114. A helical transmembrane segment spans residues 118–140 (VYFTSTSILHLCCISVDRYYAIV). The Cytoplasmic segment spans residues 141–154 (KPLKYPIKMTKKMA). Residues 155–175 (FVMLAATWLSPITISYVPIFM) traverse the membrane as a helical segment. Topologically, residues 176–202 (GWYTTTDFLESRRDDQCEFKVNKPYAV) are extracellular. Residues 203–223 (ISSSISFWIPCTIMIFTYLAI) form a helical membrane-spanning segment. The Cytoplasmic portion of the chain corresponds to 224–282 (FKEANRQEKALHARAGNAMLMHRHSREVSDKNGALHINATTPTKDRNLLKMKREHKAAR). The chain crosses the membrane as a helical span at residues 283–303 (TLGIIMGAFILCWLPFFLYYV). At 304 to 315 (STSLCDSCNCPE) the chain is on the extracellular side. A helical transmembrane segment spans residues 316–336 (VVTVIMFWTGYFNSALNPIIY). At 337–395 (AYFNRDFRNAFKNTLACAFCSFCKRSASDLDAMERLDRRGSAQLRVPIPSRRASDLASL) the chain is on the cytoplasmic side.

This sequence belongs to the G-protein coupled receptor 1 family.

It localises to the cell membrane. Functionally, autoreceptor for octopamine, which is a neurotransmitter, neurohormone, and neuromodulator in invertebrates. Also acts as a receptor for tyramine, but with much less potency. The activity of this receptor is mediated by G proteins which activate adenylyl cyclase. This chain is Octopamine receptor beta-2R, found in Chilo suppressalis (Asiatic rice borer moth).